A 223-amino-acid chain; its full sequence is Endonuclease NucS (223 aa).

This sequence belongs to the NucS endonuclease family.

Its subcellular location is the cytoplasm. In terms of biological role, cleaves both 3' and 5' ssDNA extremities of branched DNA structures. In Mycolicibacterium vanbaalenii (strain DSM 7251 / JCM 13017 / BCRC 16820 / KCTC 9966 / NRRL B-24157 / PYR-1) (Mycobacterium vanbaalenii), this protein is Endonuclease NucS.